The following is a 448-amino-acid chain: Tapasin (448 aa).

The N-terminal stretch at 1 to 20 is a signal peptide; that stretch reads MKSLSLLLAVALGLATAVSA. At 21–414 the chain is on the lumenal side; sequence GPAVIECWFV…LSGPSLEDSI (394 aa). Cys27 and Cys91 are oxidised to a cystine. Asn253 carries N-linked (GlcNAc...) asparagine glycosylation. The Ig-like C1-type domain maps to 292-399; the sequence is PKVSLMPATL…PASGRSAEVT (108 aa). Cys315 and Cys382 form a disulfide bridge. Residues 415–435 traverse the membrane as a helical segment; it reads GLFLSAFFLLGLFKALGWAAV. At 436–448 the chain is on the cytoplasmic side; that stretch reads YLSTCKDSKKKAE.

In terms of assembly, heterodimer with PDIA3; disulfide-linked. Obligatory mediator for the interaction between newly assembled MHC class I molecules, calreticulin, PDIA3 and TAP. Up to 4 MHC class I/tapasin complexes bind to 1 TAP. Interacts with HLA-G-B2M complex; this interaction is required for loading of high affinity peptides. On its own or as part of MHC class I peptide loading complex, interacts with ligand-free MR1 or MR1-B2M complex, providing for stable MR1 pools ready for metabolite antigen processing.

The protein localises to the endoplasmic reticulum membrane. In terms of biological role, involved in the association of MHC class I with transporter associated with antigen processing (TAP) and in the assembly of MHC class I with peptide (peptide loading). This is Tapasin (TAPBP) from Chlorocebus aethiops (Green monkey).